A 109-amino-acid chain; its full sequence is Putative double-stranded DNA mimic protein plu2488 (109 aa).

Belongs to the putative dsDNA mimic protein family.

Functionally, may act as a double-stranded DNA (dsDNA) mimic. Probably regulates the activity of a dsDNA-binding protein. In Photorhabdus laumondii subsp. laumondii (strain DSM 15139 / CIP 105565 / TT01) (Photorhabdus luminescens subsp. laumondii), this protein is Putative double-stranded DNA mimic protein plu2488.